A 38-amino-acid chain; its full sequence is Potassium channel toxin alpha-KTx 3.2 (38 aa).

Disulfide bonds link Cys-8–Cys-28, Cys-14–Cys-33, and Cys-18–Cys-35.

The protein belongs to the short scorpion toxin superfamily. Potassium channel inhibitor family. Alpha-KTx 03 subfamily. As to expression, expressed by the venom gland.

It localises to the secreted. Potent inhibitor of the Shaker potassium channels and its mammalian homologs (Kv1.1/KCNA1, Kv1.3/KCNA3, Kv1.6/KCNA6) (Ki&lt;1 nM for all channels). Also blocks Kv1.2/KCNA2 (IC(50)=26.8 nM). It also shows a weak interaction with nicotinic acetylcholine receptors (nAChR), suggesting it may weakly inhibit it. The chain is Potassium channel toxin alpha-KTx 3.2 from Leiurus hebraeus (Hebrew deathstalker scorpion).